A 190-amino-acid polypeptide reads, in one-letter code: Adenine phosphoribosyltransferase (190 aa).

This sequence belongs to the purine/pyrimidine phosphoribosyltransferase family. As to quaternary structure, homodimer.

The protein resides in the cytoplasm. The enzyme catalyses AMP + diphosphate = 5-phospho-alpha-D-ribose 1-diphosphate + adenine. It functions in the pathway purine metabolism; AMP biosynthesis via salvage pathway; AMP from adenine: step 1/1. Catalyzes a salvage reaction resulting in the formation of AMP, that is energically less costly than de novo synthesis. In Cupriavidus necator (strain ATCC 17699 / DSM 428 / KCTC 22496 / NCIMB 10442 / H16 / Stanier 337) (Ralstonia eutropha), this protein is Adenine phosphoribosyltransferase.